Here is a 439-residue protein sequence, read N- to C-terminus: Hydroxyornithine transacylase SID3 (439 aa).

Residues 437 to 439 carry the PTS1-type peroxisomal targeting signal motif; sequence SKL.

It belongs to the lysine N-acyltransferase mbtK family.

Its subcellular location is the peroxisome. Its pathway is siderophore biosynthesis. In terms of biological role, hydroxyornithine transacylase; part of the gene cluster that mediates the biosynthesis of hydroxamate-containing siderophores that play a critical role in virulence via intracellular iron acquisition during macrophage infection. The protein is Hydroxyornithine transacylase SID3 of Ajellomyces capsulatus (Darling's disease fungus).